The chain runs to 309 residues: uncharacterized protein (309 aa).

It belongs to the anthranilate phosphoribosyltransferase family.

This is an uncharacterized protein from Aquifex aeolicus (strain VF5).